We begin with the raw amino-acid sequence, 980 residues long: Peroxisomal ATPase PEX6 (980 aa).

Omega-N-methylarginine is present on arginine 119. Residues 470-477 (GPPGSGKT) and 744-751 (GPPGTGKT) contribute to the ATP site.

The protein belongs to the AAA ATPase family. Interacts with PEX1; forming the PEX1-PEX6 AAA ATPase complex, which is composed of a heterohexamer formed by a trimer of PEX1-PEX6 dimers. Interacts with PEX26; interaction is direct and promotes recruitment to peroxisomal membranes. Interacts with ZFAND6.

It is found in the cytoplasm. The protein localises to the cytosol. Its subcellular location is the peroxisome membrane. The protein resides in the cell projection. It localises to the cilium. It is found in the photoreceptor outer segment. The enzyme catalyses ATP + H2O = ADP + phosphate + H(+). Component of the PEX1-PEX6 AAA ATPase complex, a protein dislocase complex that mediates the ATP-dependent extraction of the PEX5 receptor from peroxisomal membranes, an essential step for PEX5 recycling. Specifically recognizes PEX5 monoubiquitinated at 'Cys-11', and pulls it out of the peroxisome lumen through the PEX2-PEX10-PEX12 retrotranslocation channel. Extraction by the PEX1-PEX6 AAA ATPase complex is accompanied by unfolding of the TPR repeats and release of bound cargo from PEX5. In Cricetulus griseus (Chinese hamster), this protein is Peroxisomal ATPase PEX6.